The following is a 517-amino-acid chain: B3 domain-containing protein REM1 (517 aa).

Positions Phe7–Ser92 form a DNA-binding region, TF-B3 1. Residues Asp115 to Ile140 show a composition bias toward acidic residues. Residues Asp115–Asp158 are disordered. The span at Ile143–Ser157 shows a compositional bias: basic and acidic residues. 2 consecutive DNA-binding regions (TF-B3) follow at residues Phe162–Glu259 and Phe285–Lys385. Residues Gly393–Lys415 are disordered.

Expressed in the shoot apical meristem (SAM), in the inflorescence apex and flowers.

The protein resides in the nucleus. Its function is as follows. May play a role in flower development. The sequence is that of B3 domain-containing protein REM1 (REM1) from Arabidopsis thaliana (Mouse-ear cress).